We begin with the raw amino-acid sequence, 66 residues long: U1-theraphotoxin-Cg1a 2 (66 aa).

Residues 1-21 form the signal peptide; it reads MKTSALFVIFGLVLLFCNSFA. The propeptide occupies 22 to 29; that stretch reads AELEMTGR. 3 cysteine pairs are disulfide-bonded: Cys31–Cys46, Cys38–Cys51, and Cys45–Cys58. Pro63 carries the post-translational modification Proline amide.

Belongs to the neurotoxin 10 (Hwtx-1) family. 46 (Jztx-7/10/12) subfamily. As to expression, expressed by the venom gland.

It is found in the secreted. Its function is as follows. Probable ion channel inhibitor. This chain is U1-theraphotoxin-Cg1a 2, found in Chilobrachys guangxiensis (Chinese earth tiger tarantula).